We begin with the raw amino-acid sequence, 853 residues long: Protein translocase subunit SecA (853 aa).

ATP is bound by residues glutamine 77, 95–99 (GEGKT), and aspartate 532.

It belongs to the SecA family. In terms of assembly, monomer and homodimer. Part of the essential Sec protein translocation apparatus which comprises SecA, SecYEG and auxiliary proteins SecDF. Other proteins may also be involved.

It is found in the cell inner membrane. The protein localises to the cytoplasm. The enzyme catalyses ATP + H2O + cellular proteinSide 1 = ADP + phosphate + cellular proteinSide 2.. In terms of biological role, part of the Sec protein translocase complex. Interacts with the SecYEG preprotein conducting channel. Has a central role in coupling the hydrolysis of ATP to the transfer of proteins into and across the cell membrane, serving as an ATP-driven molecular motor driving the stepwise translocation of polypeptide chains across the membrane. The sequence is that of Protein translocase subunit SecA from Thermosipho melanesiensis (strain DSM 12029 / CIP 104789 / BI429).